The following is a 104-amino-acid chain: Urease subunit beta (104 aa).

It belongs to the urease beta subunit family. Heterotrimer of UreA (gamma), UreB (beta) and UreC (alpha) subunits. Three heterotrimers associate to form the active enzyme.

The protein localises to the cytoplasm. The catalysed reaction is urea + 2 H2O + H(+) = hydrogencarbonate + 2 NH4(+). The protein operates within nitrogen metabolism; urea degradation; CO(2) and NH(3) from urea (urease route): step 1/1. This chain is Urease subunit beta, found in Mycolicibacterium vanbaalenii (strain DSM 7251 / JCM 13017 / BCRC 16820 / KCTC 9966 / NRRL B-24157 / PYR-1) (Mycobacterium vanbaalenii).